A 371-amino-acid chain; its full sequence is 3-dehydroquinate synthase (371 aa).

NAD(+) contacts are provided by residues 114–118, 138–139, K151, K160, and 178–181; these read GVVGD, TT, and TLNT. The Zn(2+) site is built by E193, H258, and H275.

It belongs to the sugar phosphate cyclases superfamily. Dehydroquinate synthase family. Co(2+) is required as a cofactor. Requires Zn(2+) as cofactor. The cofactor is NAD(+).

The protein resides in the cytoplasm. It catalyses the reaction 7-phospho-2-dehydro-3-deoxy-D-arabino-heptonate = 3-dehydroquinate + phosphate. The protein operates within metabolic intermediate biosynthesis; chorismate biosynthesis; chorismate from D-erythrose 4-phosphate and phosphoenolpyruvate: step 2/7. Catalyzes the conversion of 3-deoxy-D-arabino-heptulosonate 7-phosphate (DAHP) to dehydroquinate (DHQ). The sequence is that of 3-dehydroquinate synthase from Synechococcus sp. (strain CC9605).